The following is a 603-amino-acid chain: DNA-directed RNA polymerase subunit beta' N-terminal section (603 aa).

Zn(2+) contacts are provided by C283, C285, C329, and C332.

It belongs to the RNA polymerase beta' chain family. RpoC1 subfamily. In terms of assembly, in plastids the minimal PEP RNA polymerase catalytic core is composed of four subunits: alpha, beta, beta', and beta''. When a (nuclear-encoded) sigma factor is associated with the core the holoenzyme is formed, which can initiate transcription. Zn(2+) serves as cofactor.

It is found in the plastid. It localises to the chloroplast. It catalyses the reaction RNA(n) + a ribonucleoside 5'-triphosphate = RNA(n+1) + diphosphate. DNA-dependent RNA polymerase catalyzes the transcription of DNA into RNA using the four ribonucleoside triphosphates as substrates. The protein is DNA-directed RNA polymerase subunit beta' N-terminal section (rpoC1A) of Chlamydomonas reinhardtii (Chlamydomonas smithii).